The sequence spans 157 residues: 2-C-methyl-D-erythritol 2,4-cyclodiphosphate synthase (157 aa).

A divalent metal cation-binding residues include Asp8 and His10. Residues 8 to 10 and 35 to 36 contribute to the 4-CDP-2-C-methyl-D-erythritol 2-phosphate site; these read DIH and HS. A divalent metal cation is bound at residue His43. Residues 57–59, 62–66, and Lys142 each bind 4-CDP-2-C-methyl-D-erythritol 2-phosphate; these read DIG and FPNND.

This sequence belongs to the IspF family. In terms of assembly, homotrimer. Requires a divalent metal cation as cofactor.

The catalysed reaction is 4-CDP-2-C-methyl-D-erythritol 2-phosphate = 2-C-methyl-D-erythritol 2,4-cyclic diphosphate + CMP. Its pathway is isoprenoid biosynthesis; isopentenyl diphosphate biosynthesis via DXP pathway; isopentenyl diphosphate from 1-deoxy-D-xylulose 5-phosphate: step 4/6. In terms of biological role, involved in the biosynthesis of isopentenyl diphosphate (IPP) and dimethylallyl diphosphate (DMAPP), two major building blocks of isoprenoid compounds. Catalyzes the conversion of 4-diphosphocytidyl-2-C-methyl-D-erythritol 2-phosphate (CDP-ME2P) to 2-C-methyl-D-erythritol 2,4-cyclodiphosphate (ME-CPP) with a corresponding release of cytidine 5-monophosphate (CMP). This is 2-C-methyl-D-erythritol 2,4-cyclodiphosphate synthase from Wigglesworthia glossinidia brevipalpis.